The sequence spans 104 residues: L-rhamnose mutarotase (104 aa).

Tyr18 contacts substrate. The active-site Proton donor is His22. Residues Tyr41 and 76-77 (WW) each bind substrate.

The protein belongs to the rhamnose mutarotase family. As to quaternary structure, homodimer.

The protein localises to the cytoplasm. It carries out the reaction alpha-L-rhamnose = beta-L-rhamnose. Its pathway is carbohydrate metabolism; L-rhamnose metabolism. Its function is as follows. Involved in the anomeric conversion of L-rhamnose. The sequence is that of L-rhamnose mutarotase from Jannaschia sp. (strain CCS1).